The following is a 198-amino-acid chain: NAD(P)H dehydrogenase (quinone) (198 aa).

The Flavodoxin-like domain maps to 4 to 189 (ILVLYYSMYG…AIARYQGEHV (186 aa)). FMN-binding positions include 10–15 (SMYGHI) and 78–80 (TRF). Residue Y12 coordinates NAD(+). Position 98 (W98) interacts with substrate. FMN contacts are provided by residues 113-118 (STGTGG) and H133.

The protein belongs to the WrbA family. It depends on FMN as a cofactor.

The enzyme catalyses a quinone + NADH + H(+) = a quinol + NAD(+). It catalyses the reaction a quinone + NADPH + H(+) = a quinol + NADP(+). The polypeptide is NAD(P)H dehydrogenase (quinone) (Klebsiella pneumoniae (strain 342)).